The sequence spans 218 residues: Pyridoxine/pyridoxamine 5'-phosphate oxidase (218 aa).

Substrate contacts are provided by residues 12-15 (RMSY) and Arg70. FMN contacts are provided by residues 65-70 (RTVLLR), 80-81 (YT), Lys87, and Gln109. Residues Tyr127, Arg131, and Ser135 each coordinate substrate. FMN-binding positions include 145–146 (QS) and Trp191. 197-199 (RLH) is a substrate binding site. Arg201 contacts FMN.

This sequence belongs to the pyridoxamine 5'-phosphate oxidase family. As to quaternary structure, homodimer. The cofactor is FMN.

It catalyses the reaction pyridoxamine 5'-phosphate + O2 + H2O = pyridoxal 5'-phosphate + H2O2 + NH4(+). It carries out the reaction pyridoxine 5'-phosphate + O2 = pyridoxal 5'-phosphate + H2O2. Its pathway is cofactor metabolism; pyridoxal 5'-phosphate salvage; pyridoxal 5'-phosphate from pyridoxamine 5'-phosphate: step 1/1. It participates in cofactor metabolism; pyridoxal 5'-phosphate salvage; pyridoxal 5'-phosphate from pyridoxine 5'-phosphate: step 1/1. In terms of biological role, catalyzes the oxidation of either pyridoxine 5'-phosphate (PNP) or pyridoxamine 5'-phosphate (PMP) into pyridoxal 5'-phosphate (PLP). The polypeptide is Pyridoxine/pyridoxamine 5'-phosphate oxidase (Acinetobacter baylyi (strain ATCC 33305 / BD413 / ADP1)).